The chain runs to 242 residues: Protein Thf1 (242 aa).

Residues 178–209 (SSDKLQKDLDLYRSNLDKMQQLLTVIEDTLEA) adopt a coiled-coil conformation. A disordered region spans residues 212–242 (KKRASQKLEKKPEVVEEKEHKENEEQQQSSN). A compositionally biased stretch (basic and acidic residues) spans 217–235 (QKLEKKPEVVEEKEHKENE).

This sequence belongs to the THF1 family.

In terms of biological role, may be involved in photosynthetic membrane biogenesis. The sequence is that of Protein Thf1 from Crocosphaera subtropica (strain ATCC 51142 / BH68) (Cyanothece sp. (strain ATCC 51142)).